The following is a 413-amino-acid chain: RNA-binding protein 41 (413 aa).

The disordered stretch occupies residues 225–247; the sequence is SGSGTAEKPSLLQDKGKQAAQGK. The RRM domain occupies 309-387; the sequence is KVLYLKNLSP…KILVIEFAKS (79 aa).

Its function is as follows. May bind RNA. This chain is RNA-binding protein 41 (Rbm41), found in Mus musculus (Mouse).